Reading from the N-terminus, the 101-residue chain is Urease subunit beta (101 aa).

The protein belongs to the urease beta subunit family. Heterotrimer of UreA (gamma), UreB (beta) and UreC (alpha) subunits. Three heterotrimers associate to form the active enzyme.

The protein localises to the cytoplasm. The catalysed reaction is urea + 2 H2O + H(+) = hydrogencarbonate + 2 NH4(+). It participates in nitrogen metabolism; urea degradation; CO(2) and NH(3) from urea (urease route): step 1/1. The chain is Urease subunit beta from Cupriavidus necator (strain ATCC 17699 / DSM 428 / KCTC 22496 / NCIMB 10442 / H16 / Stanier 337) (Ralstonia eutropha).